A 130-amino-acid chain; its full sequence is Small ribosomal subunit protein uS8 (130 aa).

This sequence belongs to the universal ribosomal protein uS8 family. In terms of assembly, part of the 30S ribosomal subunit. Contacts proteins S5 and S12.

One of the primary rRNA binding proteins, it binds directly to 16S rRNA central domain where it helps coordinate assembly of the platform of the 30S subunit. This chain is Small ribosomal subunit protein uS8, found in Vibrio vulnificus (strain CMCP6).